The primary structure comprises 88 residues: uncharacterized protein (88 aa).

The dksA C4-type zinc-finger motif lies at 39 to 63 (CEECGAPIPQARREAIPGVRLCIHC).

This is an uncharacterized protein from Escherichia coli (strain K12).